Consider the following 427-residue polypeptide: Cysteate synthase (427 aa).

K104 carries the post-translational modification N6-(pyridoxal phosphate)lysine. Residues N130 and T382 each coordinate pyridoxal 5'-phosphate.

Belongs to the threonine synthase family. Cysteate synthase subfamily. As to quaternary structure, homotrimer. The cofactor is pyridoxal 5'-phosphate.

The enzyme catalyses O-phospho-L-serine + sulfite + H(+) = L-cysteate + phosphate. The protein operates within cofactor biosynthesis; coenzyme M biosynthesis. Specifically catalyzes the beta-elimination of phosphate from L-phosphoserine and the beta-addition of sulfite to the dehydroalanine intermediate to produce L-cysteate. The polypeptide is Cysteate synthase (Methanocella paludicola (strain DSM 17711 / JCM 13418 / NBRC 101707 / SANAE)).